The primary structure comprises 198 residues: Small ribosomal subunit protein uS7 (198 aa).

The protein belongs to the universal ribosomal protein uS7 family. As to quaternary structure, part of the 30S ribosomal subunit.

Its function is as follows. One of the primary rRNA binding proteins, it binds directly to 16S rRNA where it nucleates assembly of the head domain of the 30S subunit. Is located at the subunit interface close to the decoding center. This Desulfurococcus mucosus (Desulfurococcus mobilis) protein is Small ribosomal subunit protein uS7.